The sequence spans 223 residues: MKTIQIAIDGPASSGKSTVAKIIAKDFGFTYLDTGAMYRAATYMALKNQLGVEEVEALLALLDQHPISFGRSETGDQLVFVGDVDITHPIRENEVTNHVSAIAAIPQVREKLVSLQQEIAQQGGIVMDGRDIGTVVLPQAELKIFLVASVDERAERRYKENIAKGIETDLETLKKEIAARDYKDSHRETSPLKQAEDAVYLDTTGLNIQEVVEKIKAEAEKRM.

10 to 18 (GPASSGKST) is a binding site for ATP.

The protein belongs to the cytidylate kinase family. Type 1 subfamily.

The protein localises to the cytoplasm. It carries out the reaction CMP + ATP = CDP + ADP. It catalyses the reaction dCMP + ATP = dCDP + ADP. The polypeptide is Cytidylate kinase (Streptococcus pneumoniae serotype 4 (strain ATCC BAA-334 / TIGR4)).